Here is a 435-residue protein sequence, read N- to C-terminus: MLDSKLLRTELDETAAKLARRGFKLDVETIRTLEEQRKSIQVEVENLQSTRNSISKQIGQLMASGDKAGAEAVKQQIGTLGDDLDAKKVELDAVMAQLDAITQTVPNIPDDAVPNGKDDSENVEVSRWGTPKTYDFEVKDHVDLGEMGDGLDFASATKITGARFVVMKGQFARLHRAIAQFMLDLHTDQHGYTELYVPYLVNAETLFGTGQLPKFGQDLFHTEPLTEKASDEEPRRLSLIPTAEVPVTNLVRDTILDEAELPLKMTAHTPCFRSEAGSYGRDTRGLIRMHQFDKVELVQITRPEDSMAALEELTGHAEKVLQLLELPYRKVILCTGDMGFGSCKTYDLEVWVPAQKTYREISSCSNMWDFQARRMQARFRRKGEKKPELVHTLNGSGLAVGRTMVAILENYQEADGRIAIPAVLQKYMGGLTHIG.

Position 242-244 (242-244) interacts with L-serine; the sequence is TAE. Residue 273-275 coordinates ATP; sequence RSE. Glu296 provides a ligand contact to L-serine. 360 to 363 contributes to the ATP binding site; it reads EISS. Residue Ser396 participates in L-serine binding.

It belongs to the class-II aminoacyl-tRNA synthetase family. Type-1 seryl-tRNA synthetase subfamily. In terms of assembly, homodimer. The tRNA molecule binds across the dimer.

The protein resides in the cytoplasm. The enzyme catalyses tRNA(Ser) + L-serine + ATP = L-seryl-tRNA(Ser) + AMP + diphosphate + H(+). It carries out the reaction tRNA(Sec) + L-serine + ATP = L-seryl-tRNA(Sec) + AMP + diphosphate + H(+). It functions in the pathway aminoacyl-tRNA biosynthesis; selenocysteinyl-tRNA(Sec) biosynthesis; L-seryl-tRNA(Sec) from L-serine and tRNA(Sec): step 1/1. Catalyzes the attachment of serine to tRNA(Ser). Is also able to aminoacylate tRNA(Sec) with serine, to form the misacylated tRNA L-seryl-tRNA(Sec), which will be further converted into selenocysteinyl-tRNA(Sec). This Vibrio cholerae serotype O1 (strain ATCC 39541 / Classical Ogawa 395 / O395) protein is Serine--tRNA ligase.